Here is a 153-residue protein sequence, read N- to C-terminus: 1,4-dihydroxy-2-naphthoyl-CoA hydrolase (153 aa).

The active site involves Asp21.

It belongs to the 4-hydroxybenzoyl-CoA thioesterase family. DHNA-CoA hydrolase subfamily.

The catalysed reaction is 1,4-dihydroxy-2-naphthoyl-CoA + H2O = 1,4-dihydroxy-2-naphthoate + CoA + H(+). It functions in the pathway cofactor biosynthesis; phylloquinone biosynthesis. The protein operates within quinol/quinone metabolism; 1,4-dihydroxy-2-naphthoate biosynthesis; 1,4-dihydroxy-2-naphthoate from chorismate: step 7/7. In terms of biological role, catalyzes the hydrolysis of 1,4-dihydroxy-2-naphthoyl-CoA (DHNA-CoA) to 1,4-dihydroxy-2-naphthoate (DHNA), a reaction involved in phylloquinone (vitamin K1) biosynthesis. The polypeptide is 1,4-dihydroxy-2-naphthoyl-CoA hydrolase (Synechococcus sp. (strain WH7803)).